The primary structure comprises 588 residues: Ankyrin repeat and SOCS box protein 15 (588 aa).

ANK repeat units follow at residues 75–104, 110–139, 143–172, 176–205, 209–238, 242–271, 275–304, 307–336, 349–378, 379–408, and 416–444; these read KGWF…KTLW, DGET…WPNT, KGET…SLDQ, KRWS…NVHL, FGVT…DVLA, DGAS…SGNI, AGHL…KHAI, SGLT…DVNS, ERKT…DPNL, DPLN…NVNC, and TRFP…QVEM. The 56-residue stretch at 524-579 folds into the SOCS box domain; it reads WPEIRQILENPCSLKHLCRLKIRRLMGLQRLCQPTLMEKLSLPPTIQRYILFKEYD.

It belongs to the ankyrin SOCS box (ASB) family.

It functions in the pathway protein modification; protein ubiquitination. Functionally, may be a substrate-recognition component of a SCF-like ECS (Elongin-Cullin-SOCS-box protein) E3 ubiquitin-protein ligase complex which mediates the ubiquitination and subsequent proteasomal degradation of target proteins. The polypeptide is Ankyrin repeat and SOCS box protein 15 (ASB15) (Bos taurus (Bovine)).